Reading from the N-terminus, the 75-residue chain is Cytoplasmic envelopment protein 3 (75 aa).

A lipid anchor (N-myristoyl glycine; by host) is attached at Gly-2. The segment covering 53–65 (EGLEYDEDSENDE) has biased composition (acidic residues). The interval 53–75 (EGLEYDEDSENDELLFLPNKKPN) is disordered.

This sequence belongs to the herpesviridae cytoplasmic envelopment protein 3 family. Interacts with BGLF2; this interaction is essential for the proper localization of each protein to the assembly complex and thus for the production of infectious virus. Myristoylation and palmitoylation (probably on one or more of the nearby cysteines at the N-terminus) enable membrane-binding and Golgi apparatus-specific targeting and are essential for efficient packaging. Post-translationally, phosphorylated. Phosphorylation does not seem to be required for recycling to the host Golgi apparatus. Packaging is selective for underphosphorylated forms.

It is found in the virion tegument. The protein localises to the virion membrane. Its subcellular location is the host cell membrane. The protein resides in the host Golgi apparatus membrane. Plays an important role in the cytoplasmic envelopment of tegument proteins and capsids during the assembly and egress processes. Also participates in viral entry at the fusion step probably by regulating the core fusion machinery. This Homo sapiens (Human) protein is Cytoplasmic envelopment protein 3.